We begin with the raw amino-acid sequence, 73 residues long: Large ribosomal subunit protein bL31 (73 aa).

4 residues coordinate Zn(2+): cysteine 16, cysteine 18, cysteine 36, and cysteine 39.

Belongs to the bacterial ribosomal protein bL31 family. Type A subfamily. In terms of assembly, part of the 50S ribosomal subunit. The cofactor is Zn(2+).

Binds the 23S rRNA. This Citrifermentans bemidjiense (strain ATCC BAA-1014 / DSM 16622 / JCM 12645 / Bem) (Geobacter bemidjiensis) protein is Large ribosomal subunit protein bL31.